The primary structure comprises 955 residues: UPF0182 protein tll1193 (955 aa).

9 consecutive transmembrane segments (helical) span residues Val-6–Leu-26, Trp-53–Cys-73, Gly-98–Ala-118, Trp-163–Phe-183, Leu-186–Leu-206, Leu-240–Ala-260, Leu-280–Tyr-300, Leu-324–Ile-344, and Gly-354–Val-374.

It belongs to the UPF0182 family.

The protein localises to the cell membrane. The chain is UPF0182 protein tll1193 from Thermosynechococcus vestitus (strain NIES-2133 / IAM M-273 / BP-1).